The following is a 352-amino-acid chain: Protein pelota homolog (352 aa).

It belongs to the eukaryotic release factor 1 family. Pelota subfamily. In terms of assembly, monomer. A divalent metal cation is required as a cofactor.

Its subcellular location is the cytoplasm. In terms of biological role, may function in recognizing stalled ribosomes, interact with stem-loop structures in stalled mRNA molecules, and effect endonucleolytic cleavage of the mRNA. May play a role in the release non-functional ribosomes and degradation of damaged mRNAs. Has endoribonuclease activity. In Thermofilum pendens (strain DSM 2475 / Hrk 5), this protein is Protein pelota homolog.